Reading from the N-terminus, the 2138-residue chain is Non-reducing polyketide synthase rads2 (2138 aa).

The segment at 11-249 (LIFGDQTDSW…NPLNIHALQH (239 aa)) is N-terminal acylcarrier protein transacylase (SAT) domain. Residues 373–804 (SGRIAIVGMA…GGNACMLLED (432 aa)) form the Ketosynthase family 3 (KS3) domain. Residues Cys-549, His-684, and His-724 each act as for beta-ketoacyl synthase activity in the active site. The segment at 901 to 1184 (VFVFGGQGSH…KGVCTSFVRA (284 aa)) is malonyl-CoA:ACP transacylase (MAT) domain. Ser-992 (for acyl/malonyl transferase activity) is an active-site residue. An N-terminal hotdog fold region spans residues 1291–1437 (AQYVVQESPS…KDVQRLQADW (147 aa)). In terms of domain architecture, PKS/mFAS DH spans 1291-1610 (AQYVVQESPS…FHEISNATLK (320 aa)). The interval 1303–1607 (KKIQVTFRAS…GLEFHEISNA (305 aa)) is product template (PT) domain. Positions 1459 to 1610 (HGHRFQPDIF…FHEISNATLK (152 aa)) are C-terminal hotdog fold. The interval 1618–1666 (SKSVLKPDNAAPLKAPEKKEDATPTAPKKSADPGKEEEEEGDTATPAAV) is disordered. The Carrier domain maps to 1666–1740 (VGEFEVIIQT…DLRRAFAMAP (75 aa)). At Ser-1700 the chain carries O-(pantetheine 4'-phosphoryl)serine. Positions 1740 to 1771 (PSSSSSTSASESVSESLDDSSSTSRSATPSSS) are enriched in low complexity. Disordered stretches follow at residues 1740–1781 (PSSS…GFVE) and 1807–1828 (QATK…SSPA). Residues 1860 to 2006 (ADGTGSIATY…TRRHLGAMFS (147 aa)) form a thioesterase (TE) domain region.

Its pathway is secondary metabolite biosynthesis. Functionally, non-reducing polyketide synthase; part of the gene cluster that mediates the biosynthesis of radicicol, a resorcylic acid lactone (RAL) that irreversibly inhibits the HSP90 molecular chaperone, an important target for cancer chemotherapy. The cluster encodes only two apparent post-PKS enzymes, a cytochrome P450 monooxygenase (radP) and a non-heme halogenase (radH) that introduce the epoxide and the chlorine, respectively. If this cluster includes all the genes required for radicicol biosynthesis, the remaining structural features of radicicol are presumably generated by the PKSs rads1 and rads2. The C-2' ketone could arise if the R-PKS rads1 and NR-PKS rads2 each carry out four iterations, in contrast to the five iteration-three iteration split for the hypothemycin PKSs. The origin of the cis 5',6' double bond is not known. The radicicol R-PKS rads1 ER domain may catalyze either double bond isomerization or reduction in the third iteration. This Floropilus chiversii (Chaetomium chiversii) protein is Non-reducing polyketide synthase rads2.